Here is a 304-residue protein sequence, read N- to C-terminus: 5-hmdU DNA kinase 2 (304 aa).

The segment at Val260–Ala304 is disordered. Basic and acidic residues predominate over residues Leu266–Gln275.

The protein belongs to the thymidylate kinase family. 5-hmdU DNA kinase subfamily.

It carries out the reaction 5-hydroxymethyl-dUMP in DNA + ATP = 5-phosphomethyl-dUMP in DNA + ADP + H(+). In terms of biological role, phosphorylates 5-hydroxymethyluracil (5hmdU) into 5-phosphomethyl-2'-deoxyuridine (5- PmdU) on DNA as a step in the pathway leading to thymidine hypermodifications in the viral genome. The phosphate is added internally to the DNA polymer. As a final result of the pathway of hypermodification, 5-aminoethoxy-2'-deoxymethyluridine (5-NeOmdU) substitutes for about 40% of the thymidines in the viral DNA. These modifications probably prevent degradation of viral genome by the host restriction-modification antiviral defense system. The chain is 5-hmdU DNA kinase 2 from Salmonella typhi.